Here is a 636-residue protein sequence, read N- to C-terminus: MAPPLLLLLLASGAAACPLPCVCQNLSESLSTLCAHRGLLFVPPNVDRRTVELRLADNFIQALGPPDFRNMTGLVDLTLSRNAITRIGARSFGDLESLRSLHLDGNRLVELGSSSLRGPVNLQHLILSGNQLGRIAPGAFDDFLDSLEDLDVSYNNLRQVPWAGIGSMPALHTLNLDHNLIDALPPGVFAQLSQLSRLDLTSNRLATLAPDPLFSRGRDAEASPSPLVLSFSGNPLHCNCELLWLRRLARPDDLETCASPPTLAGRYFWAVPEGEFSCEPPLIARHTQRLWVLEGQRATLRCRALGDPVPTMHWVGPDDRLVGNSSRAWAFPNGTLEIGVTGAGDAGAYTCIATNPAGEATARVELRVLALPHGGNTSAEGGRPGPSDIAASARTAAEGEGTLESEPAVQVTEVTATSGLVSWGPGRPADPVWMFQIQYNSSEDETLIYRIVPASSQHFLLKHLVPGADYDLCLLALSPAAGPSDLTATRLLGCAHFSTLPATPLCHALQAHVLGGTLTVAVGGVLVAALLVFTVALLVRGRGAGNGRLPLKLSHVQSQTNGGTSPMPKSHPPRSPPPRPQRSCSLDLGDTGGCYGYARRLGGAWARRSHSVHGGLLGAGCRGMGGSAERLEESVV.

The signal sequence occupies residues 1 to 16; that stretch reads MAPPLLLLLLASGAAA. The LRRNT domain maps to 17–48; the sequence is CPLPCVCQNLSESLSTLCAHRGLLFVPPNVDR. The Extracellular portion of the chain corresponds to 17 to 518; sequence CPLPCVCQNL…LQAHVLGGTL (502 aa). Asn25 carries N-linked (GlcNAc...) asparagine glycosylation. LRR repeat units lie at residues 49–70, 73–94, 97–118, 121–142, 146–169, 170–191, and 194–215; these read RTVE…DFRN, GLVD…SFGD, SLRS…SLRG, NLQH…AFDD, SLED…GSMP, ALHT…VFAQ, and QLSR…PLFS. The 47-residue stretch at 234-280 folds into the LRRCT domain; that stretch reads NPLHCNCELLWLRRLARPDDLETCASPPTLAGRYFWAVPEGEFSCEP. Positions 281–367 constitute an Ig-like domain; that stretch reads PLIARHTQRL…GEATARVELR (87 aa). Cys302 and Cys351 are disulfide-bonded. The N-linked (GlcNAc...) asparagine glycan is linked to Asn333. Positions 405–502 constitute a Fibronectin type-III domain; it reads SEPAVQVTEV…GCAHFSTLPA (98 aa). The chain crosses the membrane as a helical span at residues 519–539; the sequence is TVAVGGVLVAALLVFTVALLV. Over 540 to 636 the chain is Cytoplasmic; that stretch reads RGRGAGNGRL…SAERLEESVV (97 aa). The interval 556-585 is disordered; it reads VQSQTNGGTSPMPKSHPPRSPPPRPQRSCS. Residues 569–580 are compositionally biased toward pro residues; it reads KSHPPRSPPPRP. Residues Ser585 and Ser627 each carry the phosphoserine modification. Positions 633–636 match the PDZ-binding motif; it reads ESVV.

It belongs to the LRFN family. As to quaternary structure, forms heteromeric complexes with LRFN1 and LRFN2. Can form heteromeric complexes with LRFN3 and LRFN5. Unable to form homophilic interactions across cell junctions. Interacts with DLG1, DLG2, DLG3 and DLG4. Glycosylated.

It localises to the membrane. Its function is as follows. Promotes neurite outgrowth in hippocampal neurons. May play a role in redistributing DLG4 to the cell periphery. This is Leucine-rich repeat and fibronectin type-III domain-containing protein 4 (Lrfn4) from Rattus norvegicus (Rat).